A 176-amino-acid polypeptide reads, in one-letter code: Large ribosomal subunit protein uL6 (176 aa).

Residues 151 to 170 (RPPEPYKGKGVRYADEQVRR) are compositionally biased toward basic and acidic residues. Residues 151–176 (RPPEPYKGKGVRYADEQVRRKEAKKK) form a disordered region.

The protein belongs to the universal ribosomal protein uL6 family. In terms of assembly, part of the 50S ribosomal subunit.

In terms of biological role, this protein binds to the 23S rRNA, and is important in its secondary structure. It is located near the subunit interface in the base of the L7/L12 stalk, and near the tRNA binding site of the peptidyltransferase center. This Shewanella loihica (strain ATCC BAA-1088 / PV-4) protein is Large ribosomal subunit protein uL6.